The chain runs to 408 residues: Neutral cholesterol ester hydrolase 1 (408 aa).

Residues 1–4 are Cytoplasmic-facing; sequence MRSS. The chain crosses the membrane as a helical; Signal-anchor for type II membrane protein span at residues 5-25; that stretch reads CVLLAALLALAAYYVYIPLPS. Residues 26–408 are Lumenal-facing; sequence AVSDPWKLML…SYIKWLDQNL (383 aa). An Involved in the stabilization of the negatively charged intermediate by the formation of the oxyanion hole motif is present at residues 113–115; sequence HGG. S191 is an active-site residue. N-linked (GlcNAc...) asparagine glycosylation is present at N270. D348 is an active-site residue. N367 is a glycosylation site (N-linked (GlcNAc...) asparagine). Residue H378 is part of the active site. N389 carries an N-linked (GlcNAc...) asparagine glycan.

It belongs to the 'GDXG' lipolytic enzyme family. In terms of processing, N-glycosylated. In terms of tissue distribution, present in brain, heart, kidney, lung, spinal cord and testis but not liver (at protein level). Expressed in peritoneal macrophages and kidney.

Its subcellular location is the cell membrane. The protein resides in the microsome. The catalysed reaction is a 1-O-alkyl-2-acetyl-sn-glycerol + H2O = a 1-O-alkyl-sn-glycerol + acetate + H(+). It carries out the reaction 1-O-hexadecyl-2-acetyl-sn-glycerol + H2O = 1-O-hexadecyl-sn-glycerol + acetate + H(+). It catalyses the reaction a cholesterol ester + H2O = cholesterol + a fatty acid + H(+). The enzyme catalyses cholesteryl (9Z-octadecenoate) + H2O = cholesterol + (9Z)-octadecenoate + H(+). With respect to regulation, inhibited by bulky trifluoromethyl ketones. In terms of biological role, hydrolyzes 2-acetyl monoalkylglycerol ether (1-O-alkyl-2-acetyl-sn-glycerol), the penultimate precursor of the pathway for de novo synthesis of platelet-activating factor. May be responsible for the hydrolysis of cholesterol esters (such as cholesteryl (9Z-octadecenoate)) in macrophages. Also involved in organ detoxification by hydrolyzing exogenous organophosphorus compounds. This chain is Neutral cholesterol ester hydrolase 1 (Nceh1), found in Mus musculus (Mouse).